Here is a 706-residue protein sequence, read N- to C-terminus: Translation factor GUF1 homolog, mitochondrial (706 aa).

The 184-residue stretch at 89–272 folds into the tr-type G domain; sequence SRIRNFSIIA…SIVKNVPPPQ (184 aa). Residues 98-105, 165-169, and 219-222 each bind GTP; these read AHIDHGKS, DTPGH, and NKID.

It belongs to the TRAFAC class translation factor GTPase superfamily. Classic translation factor GTPase family. LepA subfamily.

Its subcellular location is the mitochondrion inner membrane. It catalyses the reaction GTP + H2O = GDP + phosphate + H(+). Its function is as follows. Promotes mitochondrial protein synthesis. May act as a fidelity factor of the translation reaction, by catalyzing a one-codon backward translocation of tRNAs on improperly translocated ribosomes. Binds to mitochondrial ribosomes in a GTP-dependent manner. This is Translation factor GUF1 homolog, mitochondrial from Thalassiosira pseudonana (Marine diatom).